The sequence spans 202 residues: Transmembrane 4 L6 family member 1 (202 aa).

At methionine 1–tyrosine 9 the chain is on the cytoplasmic side. Residues isoleucine 10–phenylalanine 30 traverse the membrane as a helical segment. Residues proline 31–tyrosine 49 are Extracellular-facing. A helical membrane pass occupies residues phenylalanine 50 to methionine 70. Over aspartate 71–serine 93 the chain is Cytoplasmic. Residues valine 94–glycine 114 traverse the membrane as a helical segment. Topologically, residues leucine 115–threonine 161 are extracellular. Residues asparagine 129 and asparagine 142 are each glycosylated (N-linked (GlcNAc...) asparagine). The helical transmembrane segment at leucine 162–isoleucine 182 threads the bilayer. Over asparagine 183–cysteine 202 the chain is Cytoplasmic.

Belongs to the L6 tetraspanin family. In terms of assembly, present in high molecular weight complexes in tumor cells. Interacts with SDCBP2. Highly expressed in skin and lung. Moderately expressed in lymph nodes and kidneys. Also present in thymic stroma and fibroblasts.

The protein resides in the membrane. In Mus musculus (Mouse), this protein is Transmembrane 4 L6 family member 1 (Tm4sf1).